Reading from the N-terminus, the 288-residue chain is Fibroblast growth factor 2 (288 aa).

The propeptide occupies Met1–Leu142. Positions Met1 to Pro156 are disordered. Residues Glu72–Arg84 show a composition bias toward basic and acidic residues. Omega-N-methylarginine; alternate occurs at positions 108, 110, and 112. A symmetric dimethylarginine; alternate mark is found at Arg108, Arg110, and Arg112. Residues Gly113 to Gly132 are compositionally biased toward low complexity. Position 169 (Asn169) interacts with heparin. The Cell attachment site; atypical motif lies at Asp179–Arg181. Tyr215 is modified (phosphotyrosine; by TEC). Positions Asp221–Arg223 match the Cell attachment site; atypical motif. Lys228 participates in a covalent cross-link: Glycyl lysine isopeptide (Lys-Gly) (interchain with G-Cter in SUMO1). Positions Lys261 to Lys277 are heparin-binding.

It belongs to the heparin-binding growth factors family. In terms of assembly, monomer. Homodimer. Interacts with FGFR1, FGFR2, FGFR3 and FGFR4. Affinity between fibroblast growth factors (FGFs) and their receptors is increased by heparan sulfate glycosaminoglycans that function as coreceptors. Interacts with CSPG4, FGFBP1 and TEC. Found in a complex with FGFBP1, FGF1 and FGF2. Interacts with FGFBP3. Interacts with integrin ITGAV:ITGB3; the interaction is required for FGF2 signaling. Interacts with SNORC (via the extracellular domain). Interacts with glypican GPC3. Post-translationally, phosphorylation at Tyr-215 regulates FGF2 unconventional secretion.

It localises to the secreted. The protein resides in the nucleus. Acts as a ligand for FGFR1, FGFR2, FGFR3 and FGFR4. Also acts as an integrin ligand which is required for FGF2 signaling. Binds to integrin ITGAV:ITGB3. Plays an important role in the regulation of cell survival, cell division, cell differentiation and cell migration. Functions as a potent mitogen in vitro. Can induce angiogenesis. Mediates phosphorylation of ERK1/2 and thereby promotes retinal lens fiber differentiation. This chain is Fibroblast growth factor 2, found in Pan troglodytes (Chimpanzee).